The chain runs to 271 residues: Inactive phospholipid phosphatase 7 (271 aa).

The disordered stretch occupies residues 1 to 66; it reads MPASQSRARA…RERRQSQQLP (66 aa). The Cytoplasmic portion of the chain corresponds to 1-112; sequence MPASQSRARA…AASWASARSM (112 aa). Phosphoserine is present on residues Ser43 and Ser62. The segment at 70 to 91 is interaction with MTOR; it reads CMQLNPSFKGIAFNSLLAIDIC. A helical transmembrane segment spans residues 113–133; that stretch reads VKLIGITGHGIPWIGGTILCL. At 134–141 the chain is on the extracellular side; the sequence is VKSSTLAG. Residues 142-162 form a helical membrane-spanning segment; that stretch reads QEVLMNLLLALLLDIMTVAGV. At 163 to 202 the chain is on the cytoplasmic side; the sequence is QKLIKRRGPYETSPSLLDYLTMDIYAFPAGHASRAAMVSK. The helical transmembrane segment at 203–223 threads the bilayer; sequence FFLSHLVLAVPLRVLLVLWAL. At 224 to 239 the chain is on the extracellular side; the sequence is CVGLSRVMIGRHHVTD. A helical membrane pass occupies residues 240–260; that stretch reads VLSGFVIGYLQFRLVELVWMP. Over 261–271 the chain is Cytoplasmic; it reads SSTCQMLISAW.

This sequence belongs to the PA-phosphatase related phosphoesterase family. In terms of assembly, homo and heterooligomer. Interacts with MTOR; controls MTOR-dependent IGF2 expression during myoblast differentiation.

It localises to the nucleus envelope. Its subcellular location is the endoplasmic reticulum membrane. It is found in the membrane. Its function is as follows. Plays a role as negative regulator of myoblast differentiation, in part through effects on MTOR signaling. Has no detectable enzymatic activity. The polypeptide is Inactive phospholipid phosphatase 7 (Homo sapiens (Human)).